The following is a 186-amino-acid chain: Large ribosomal subunit protein uL5c (186 aa).

The protein belongs to the universal ribosomal protein uL5 family. Part of the 50S ribosomal subunit; contacts the 5S rRNA.

The protein localises to the plastid. It localises to the chloroplast. Functionally, binds 5S rRNA, forms part of the central protuberance of the 50S subunit. This chain is Large ribosomal subunit protein uL5c (rpl5), found in Pleurastrum terricola (Filamentous green alga).